The sequence spans 200 residues: Probable GTP-binding protein EngB (200 aa).

Residues 24–198 (EGMEVAFAGR…QAQLDEWLGI (175 aa)) form the EngB-type G domain. GTP-binding positions include 32–39 (GRSNVGKS), 59–63 (GRTQM), 77–80 (DLPG), 144–147 (TKSD), and 177–179 (FSA). Residues serine 39 and threonine 61 each contribute to the Mg(2+) site.

It belongs to the TRAFAC class TrmE-Era-EngA-EngB-Septin-like GTPase superfamily. EngB GTPase family. It depends on Mg(2+) as a cofactor.

Necessary for normal cell division and for the maintenance of normal septation. In Nitrosococcus oceani (strain ATCC 19707 / BCRC 17464 / JCM 30415 / NCIMB 11848 / C-107), this protein is Probable GTP-binding protein EngB.